Here is a 189-residue protein sequence, read N- to C-terminus: Dynactin subunit 6 (189 aa).

This sequence belongs to the dynactin subunits 5/6 family. Dynactin subunit 6 subfamily. As to quaternary structure, subunit of dynactin, a multiprotein complex part of a tripartite complex with dynein and a adapter, such as BICDL1, BICD2 or HOOK3. The dynactin complex is built around ACTR1A/ACTB filament and consists of an actin-related filament composed of a shoulder domain, a pointed end and a barbed end.

Its subcellular location is the cytoplasm. It localises to the cytoskeleton. In terms of biological role, part of the dynactin complex that activates the molecular motor dynein for ultra-processive transport along microtubules. The sequence is that of Dynactin subunit 6 (dynF) from Dictyostelium discoideum (Social amoeba).